The chain runs to 318 residues: N-succinylornithine carbamoyltransferase (318 aa).

Residues 47–50 (SLRT), Trp-75, and Arg-110 contribute to the carbamoyl phosphate site. Residue Glu-142 participates in N(2)-succinyl-L-ornithine binding. 147 to 150 (HPLQ) provides a ligand contact to carbamoyl phosphate. Residues His-176 and Lys-236 each coordinate N(2)-succinyl-L-ornithine. Residue 274-275 (CL) participates in carbamoyl phosphate binding. Residue Arg-278 participates in N(2)-succinyl-L-ornithine binding. Arg-302 provides a ligand contact to carbamoyl phosphate.

This sequence belongs to the aspartate/ornithine carbamoyltransferase superfamily. SOTCase family. In terms of assembly, homotrimer.

The enzyme catalyses N(2)-succinyl-L-ornithine + carbamoyl phosphate = N(2)-succinyl-L-citrulline + phosphate + H(+). It participates in amino-acid biosynthesis; L-arginine biosynthesis. In terms of biological role, catalyzes the transfer of the carbamoyl group from carbamoyl phosphate to the delta-amino group of N(2)-succinyl-L-ornithine to produce N(2)-succinyl-L-citrulline. Is essential for arginine biosynthesis. Has no activity with either L-ornithine or L-aspartate as substrate. Also has no detectable AOTCase activity, being unable to convert N(2)-acetyl-L-ornithine to N(2)-acetyl-L-citrulline. The polypeptide is N-succinylornithine carbamoyltransferase (Bacteroides thetaiotaomicron (strain ATCC 29148 / DSM 2079 / JCM 5827 / CCUG 10774 / NCTC 10582 / VPI-5482 / E50)).